Here is a 199-residue protein sequence, read N- to C-terminus: Imidazole glycerol phosphate synthase subunit HisH (199 aa).

A Glutamine amidotransferase type-1 domain is found at 2–199; sequence RAVIIDYGVG…LTNVYRWLRK (198 aa). Cys76 serves as the catalytic Nucleophile. Residues His178 and Glu180 contribute to the active site.

As to quaternary structure, heterodimer of HisH and HisF.

The protein resides in the cytoplasm. It catalyses the reaction 5-[(5-phospho-1-deoxy-D-ribulos-1-ylimino)methylamino]-1-(5-phospho-beta-D-ribosyl)imidazole-4-carboxamide + L-glutamine = D-erythro-1-(imidazol-4-yl)glycerol 3-phosphate + 5-amino-1-(5-phospho-beta-D-ribosyl)imidazole-4-carboxamide + L-glutamate + H(+). The catalysed reaction is L-glutamine + H2O = L-glutamate + NH4(+). It functions in the pathway amino-acid biosynthesis; L-histidine biosynthesis; L-histidine from 5-phospho-alpha-D-ribose 1-diphosphate: step 5/9. Functionally, IGPS catalyzes the conversion of PRFAR and glutamine to IGP, AICAR and glutamate. The HisH subunit catalyzes the hydrolysis of glutamine to glutamate and ammonia as part of the synthesis of IGP and AICAR. The resulting ammonia molecule is channeled to the active site of HisF. This chain is Imidazole glycerol phosphate synthase subunit HisH, found in Sulfolobus acidocaldarius (strain ATCC 33909 / DSM 639 / JCM 8929 / NBRC 15157 / NCIMB 11770).